Consider the following 329-residue polypeptide: Solute carrier family 35 member B1 (329 aa).

The next 8 membrane-spanning stretches (helical) occupy residues 21–41 (AVCF…QETI), 60–80 (TLVF…IQFF), 91–111 (WLYG…NSAL), 142–162 (YPMA…LFLY), 175–195 (VFGF…LTGV), 220–240 (TLVL…LAFT), 250–270 (ILLF…TVVY), and 292–312 (VLLF…LVFL). The Di-lysine motif motif lies at 325–329 (KKTTH).

The protein belongs to the nucleotide-sugar transporter family. SLC35B subfamily.

The protein localises to the endoplasmic reticulum membrane. Functionally, probable sugar transporter. This Danio rerio (Zebrafish) protein is Solute carrier family 35 member B1 (slc35b1).